The chain runs to 323 residues: MAAGRELVVSFGEMLIDFVPTVAGVSLAEAPAFLKAPGGAPANVAIAVSRLGGGAAFVGKLGDDEFGRMLAAILRDNGVDDGGVVFDSGARTALAFVTLRADGEREFMFYRNPSADMLLTADELNVELIKRAAVFHYGSISLIAEPCRTAHLRAMEIAKEAGALLSYDPNLREALWPSREEARTQILSIWDQADIVKVSEVELEFLTGIDSVEDDVVMKLWRPTMKLLLVTLGDQGCKYYARDFHGAVPSFKVQQVDTTGAGDAFVGALLQRIVKDPSSLQDEKKLVESIKFANACGAITTTKKGAIPSLPTEAEVLQLIEKA.

Belongs to the carbohydrate kinase PfkB family. In terms of tissue distribution, expressed in stems, at higher levels in roots, and hardly detectable in leaves.

It catalyses the reaction D-fructose + ATP = D-fructose 6-phosphate + ADP + H(+). It participates in glycan biosynthesis; starch biosynthesis. Its activity is regulated as follows. Inhibited at high fructose. In terms of biological role, may play an important role in maintaining the flux of carbon towards starch formation in endosperm. May also be involved in a sugar-sensing pathway. The sequence is that of Fructokinase-1 (FRK1) from Zea mays (Maize).